Consider the following 1021-residue polypeptide: DNA-directed RNA polymerase 2B, chloroplastic/mitochondrial (1021 aa).

The segment at lysine 315–lysine 337 is disordered. Catalysis depends on residues aspartate 722, lysine 797, and aspartate 954.

It belongs to the phage and mitochondrial RNA polymerase family.

The protein resides in the plastid. It localises to the chloroplast. The protein localises to the mitochondrion. The enzyme catalyses RNA(n) + a ribonucleoside 5'-triphosphate = RNA(n+1) + diphosphate. Its function is as follows. DNA-dependent RNA polymerase catalyzes the transcription of DNA into RNA using the four ribonucleoside triphosphates as substrates. This is DNA-directed RNA polymerase 2B, chloroplastic/mitochondrial (RPOT2-TOM) from Nicotiana tabacum (Common tobacco).